We begin with the raw amino-acid sequence, 226 residues long: Cytochrome c oxidase subunit 2 (226 aa).

Residues Met-1–Phe-25 are Mitochondrial intermembrane-facing. The chain crosses the membrane as a helical span at residues Thr-26–Asn-47. At Asn-48 to Glu-61 the chain is on the mitochondrial matrix side. The helical transmembrane segment at Leu-62–Lys-81 threads the bilayer. The Mitochondrial intermembrane portion of the chain corresponds to Ile-82–Leu-226. The Cu cation site is built by His-160, Cys-195, Glu-197, Cys-199, His-203, and Met-206. Glu-197 is a Mg(2+) binding site.

This sequence belongs to the cytochrome c oxidase subunit 2 family. As to quaternary structure, component of the cytochrome c oxidase (complex IV, CIV), a multisubunit enzyme composed of a catalytic core of 3 subunits and several supernumerary subunits. The complex exists as a monomer or a dimer and forms supercomplexes (SCs) in the inner mitochondrial membrane with ubiquinol-cytochrome c oxidoreductase (cytochrome b-c1 complex, complex III, CIII). It depends on Cu cation as a cofactor.

It is found in the mitochondrion inner membrane. The enzyme catalyses 4 Fe(II)-[cytochrome c] + O2 + 8 H(+)(in) = 4 Fe(III)-[cytochrome c] + 2 H2O + 4 H(+)(out). Its function is as follows. Component of the cytochrome c oxidase, the last enzyme in the mitochondrial electron transport chain which drives oxidative phosphorylation. The respiratory chain contains 3 multisubunit complexes succinate dehydrogenase (complex II, CII), ubiquinol-cytochrome c oxidoreductase (cytochrome b-c1 complex, complex III, CIII) and cytochrome c oxidase (complex IV, CIV), that cooperate to transfer electrons derived from NADH and succinate to molecular oxygen, creating an electrochemical gradient over the inner membrane that drives transmembrane transport and the ATP synthase. Cytochrome c oxidase is the component of the respiratory chain that catalyzes the reduction of oxygen to water. Electrons originating from reduced cytochrome c in the intermembrane space (IMS) are transferred via the dinuclear copper A center (CU(A)) of subunit 2 and heme A of subunit 1 to the active site in subunit 1, a binuclear center (BNC) formed by heme A3 and copper B (CU(B)). The BNC reduces molecular oxygen to 2 water molecules using 4 electrons from cytochrome c in the IMS and 4 protons from the mitochondrial matrix. This Lasius sp protein is Cytochrome c oxidase subunit 2 (COII).